Reading from the N-terminus, the 207-residue chain is Large ribosomal subunit protein uL4 (207 aa).

Residues 44–77 form a disordered region; it reads RRQGTHDTKTRSEVRGGGRKPWRQKGTGRARHGT. Basic and acidic residues predominate over residues 47 to 59; sequence GTHDTKTRSEVRG. Residues 60-77 are compositionally biased toward basic residues; that stretch reads GGRKPWRQKGTGRARHGT.

It belongs to the universal ribosomal protein uL4 family. Part of the 50S ribosomal subunit.

Its function is as follows. One of the primary rRNA binding proteins, this protein initially binds near the 5'-end of the 23S rRNA. It is important during the early stages of 50S assembly. It makes multiple contacts with different domains of the 23S rRNA in the assembled 50S subunit and ribosome. Functionally, forms part of the polypeptide exit tunnel. The sequence is that of Large ribosomal subunit protein uL4 from Desulforudis audaxviator (strain MP104C).